We begin with the raw amino-acid sequence, 277 residues long: Carbonyl reductase [NADPH] 3 (277 aa).

Ser2 is modified (N-acetylserine). NADP(+)-binding positions include 10 to 34 (VTGA…GDVV), 38 to 42 (RDEAR), 63 to 64 (DI), and Asn90. Ser30 carries the post-translational modification Phosphoserine. Ser140 provides a ligand contact to substrate. Tyr194 functions as the Proton acceptor in the catalytic mechanism. 194–198 (YGVSK) contacts NADP(+).

This sequence belongs to the short-chain dehydrogenases/reductases (SDR) family.

Its subcellular location is the cytoplasm. It catalyses the reaction a secondary alcohol + NADP(+) = a ketone + NADPH + H(+). The enzyme catalyses a quinone + NADPH + H(+) = a quinol + NADP(+). Catalyzes the NADPH-dependent reduction of carbonyl compounds to their corresponding alcohols. Has low NADPH-dependent oxidoreductase activity. Acts on several orthoquinones, as well as on non-quinone compounds, such as isatin or on the anticancer drug oracin. Best substrates for CBR3 is 1,2- naphthoquinone, hence could play a role in protection against cytotoxicity of exogenous quinones. Exerts activity toward ortho-quinones but not paraquinones. No endogenous substrate for CBR3 except isatin has been identified. This is Carbonyl reductase [NADPH] 3 from Rattus norvegicus (Rat).